Reading from the N-terminus, the 840-residue chain is Transient receptor potential cation channel subfamily V member 1 (840 aa).

Positions 1–12 are enriched in low complexity; that stretch reads MKNWGSSDSGGS. The segment at 1 to 43 is disordered; the sequence is MKNWGSSDSGGSEDPPQEDSCLDPLDGDPNSRPVPAKPHIFPT. Topologically, residues 1–433 are cytoplasmic; the sequence is MKNWGSSDSG…QDKWDRFVKR (433 aa). ANK repeat units follow at residues 111–139 and 154–186; these read KLYD…FLQK and TGKT…QTDS. Residues Arg116, Lys156, Lys161, Asn165, 200-203, and 211-212 each bind ATP; these read YKGQ and ER. 4 ANK repeats span residues 204–229, 250–277, 286–322, and 336–359; these read TALH…ADVQ, ELPL…QPAD, NTVL…KLHP, and TPLA…REIQ. At Thr371 the chain carries Phosphothreonine; by PKA; in vitro. One copy of the ANK 7 repeat lies at 394–416; it reads NSVLEVIAYSSSETPNRHDMLLV. Residues 434 to 455 traverse the membrane as a helical segment; the sequence is IFYFNFFIYCLYMIIFTTAAYY. The Extracellular portion of the chain corresponds to 456–473; sequence RPVDGLPPYKLKHTVGDY. Residues 474 to 498 traverse the membrane as a helical segment; it reads FRVTGEILSVLGGVYFFFRGIQYFL. Residues 499–511 lie on the Cytoplasmic side of the membrane; it reads QRRPSLKTLFVDS. At Ser503 the chain carries Phosphoserine; by PKC/PRKCE. 512 to 513 is a resiniferatoxin binding site; that stretch reads YS. A helical transmembrane segment spans residues 512-533; the sequence is YSEMLFFVQSLFMLGTVVLYFC. The Extracellular segment spans residues 534–536; that stretch reads HHK. Residues 537-557 form a helical membrane-spanning segment; the sequence is EYVASMVFSLAMGWTNMLYYT. Residues Thr551 and Arg558 each coordinate resiniferatoxin. The Cytoplasmic portion of the chain corresponds to 558–560; it reads RGF. The chain crosses the membrane as a helical span at residues 561-599; sequence QQMGIYAVMIEKMILRDLCRFMFVYLVFLFGFSTAVVTL. Residues 600–631 are Extracellular-facing; the sequence is IEDGKNNSVPTESTLHRWRGPGCRPPDSSYNS. The N-linked (GlcNAc...) asparagine glycan is linked to Asn605. Residues 632 to 653 constitute an intramembrane region (pore-forming); the sequence is LYSTCLELFKFTIGMGDLEFTE. Gly645 lines the Na(+) pocket. Positions 645–648 match the Selectivity filter motif; it reads GMGD. Asp648 is a Ca(2+) binding site. The Extracellular segment spans residues 654-657; the sequence is NYDF. Residues 658–684 form a helical membrane-spanning segment; sequence KAVFIILLLAYVILTYILLLNMLIALM. At 685-840 the chain is on the cytoplasmic side; that stretch reads GETVNKIAQE…FKDPVGLGEK (156 aa). The interval 686–714 is AD; that stretch reads ETVNKIAQESKNIWKLQRAITILDTEKSF. Position 706 is a phosphothreonine (Thr706). An interaction with calmodulin region spans residues 769–803; sequence EGIKRTLSFSLRSGRVSGRNWKNFSLVPLLRDAST. At Ser776 the chain carries Phosphoserine. The interval 779–794 is required for PIP2-mediated channel inhibition; sequence LRSGRVSGRNWKNFSL. The residue at position 802 (Ser802) is a Phosphoserine; by PKC/PRKCE and PKC/PRKCZ. A Phosphoserine modification is found at Ser822.

The protein belongs to the transient receptor (TC 1.A.4) family. TrpV subfamily. TRPV1 sub-subfamily. As to quaternary structure, homotetramer. Interacts with PIRT. May also form a heteromeric channel with TRPV3. Interacts with CALM, PRKCM and CSK. Interacts with PRKCG and NTRK1, probably by forming a trimeric complex. Interacts with the Scolopendra mutilans RhTx toxin. Interacts with TMEM100. Interacts with PACS2. In terms of processing, phosphorylation by PKA reverses capsaicin-induced dephosphorylation at multiple sites. Phosphorylation by CAMKII seems to regulate binding to vanilloids. Phosphorylated and modulated by PRKCE, PRKCM and probably PRKCZ. Dephosphorylation by calcineurin seems to lead to receptor desensitization and phosphorylation by CAMKII recovers activity.

The protein localises to the postsynaptic cell membrane. Its subcellular location is the cell projection. The protein resides in the dendritic spine membrane. It is found in the cell membrane. It catalyses the reaction Ca(2+)(in) = Ca(2+)(out). The enzyme catalyses Mg(2+)(in) = Mg(2+)(out). The catalysed reaction is Na(+)(in) = Na(+)(out). It carries out the reaction K(+)(in) = K(+)(out). Its activity is regulated as follows. Channel activity is activated via the interaction with PIRT and phosphatidylinositol 4,5-bisphosphate (PIP2). Both PIRT and PIP2 are required to activate channel activity. The channel is sensitized by ATP binding. Repeated stimulation with capsaicin gives rise to progressively smaller responses, due to desensitization. This desensitization is triggered by the influx of calcium ions and is inhibited by elevated ATP levels. Ca(2+) and CALM displace ATP from its binding site and trigger a conformation change that leads to a closed, desensitized channel. Intracellular PIP2 inhibits desensitization. The double-knot toxin (DkTx) from the Chinese earth tiger tarantula activates the channel and traps it in an open conformation. The Scolopendra mutilans RhTx toxin potentiates the heat activation pathway mediated by this channel by binding to the charge-rich outer pore region (in an activated state). In terms of biological role, non-selective calcium permeant cation channel involved in detection of noxious chemical and thermal stimuli. Seems to mediate proton influx and may be involved in intracellular acidosis in nociceptive neurons. Involved in mediation of inflammatory pain and hyperalgesia. Sensitized by a phosphatidylinositol second messenger system activated by receptor tyrosine kinases, which involves PKC isozymes and PCL. Activated by vanilloids, like capsaicin, and temperatures higher than 42 degrees Celsius. Upon activation, exhibits a time- and Ca(2+)-dependent outward rectification, followed by a long-lasting refractory state. Mild extracellular acidic pH (6.5) potentiates channel activation by noxious heat and vanilloids, whereas acidic conditions (pH &lt;6) directly activate the channel. Can be activated by endogenous compounds, including 12-hydroperoxytetraenoic acid and bradykinin. Acts as ionotropic endocannabinoid receptor with central neuromodulatory effects. Triggers a form of long-term depression (TRPV1-LTD) mediated by the endocannabinoid anandamine in the hippocampus and nucleus accumbens by affecting AMPA receptors endocytosis. This Canis lupus familiaris (Dog) protein is Transient receptor potential cation channel subfamily V member 1 (TRPV1).